The chain runs to 104 residues: Large ribosomal subunit protein uL24 (104 aa).

It belongs to the universal ribosomal protein uL24 family. Part of the 50S ribosomal subunit.

In terms of biological role, one of two assembly initiator proteins, it binds directly to the 5'-end of the 23S rRNA, where it nucleates assembly of the 50S subunit. Its function is as follows. One of the proteins that surrounds the polypeptide exit tunnel on the outside of the subunit. This chain is Large ribosomal subunit protein uL24, found in Pseudomonas entomophila (strain L48).